The sequence spans 325 residues: Metacaspase-9 (325 aa).

Active-site residues include H95 and C147. Position 147 is an S-nitrosocysteine (C147). An N-linked (GlcNAc...) asparagine glycan is attached at N177.

It belongs to the peptidase C14B family. The two subunits are derived from the precursor sequence by an autocatalytic mechanism. In terms of processing, S-nitrosylation at Cys-147 suppresses both autoprocessing and proteolytic activity of the full-length protein, but does not affect the activity of the mature processed form. Expressed in root tips, cauline leaves, flowers and siliques.

Its subcellular location is the secreted. The protein localises to the extracellular space. The protein resides in the apoplast. Inhibited by serpin ZX and nitric oxide through cysteine nitrosylation. In terms of biological role, cysteine protease that cleaves specifically after arginine or lysine residues. Does not cleave caspase-specific substrates. Required for proteolytic processing of GRI. This Arabidopsis thaliana (Mouse-ear cress) protein is Metacaspase-9 (AMC9).